Reading from the N-terminus, the 239-residue chain is Probable transcriptional regulatory protein LMOf2365_0385 (239 aa).

This sequence belongs to the TACO1 family. YeeN subfamily.

The protein localises to the cytoplasm. The protein is Probable transcriptional regulatory protein LMOf2365_0385 of Listeria monocytogenes serotype 4b (strain F2365).